Reading from the N-terminus, the 243-residue chain is Proteasome subunit beta (243 aa).

Positions 1–16 (MRAPQHNSDFSRTVNQ) are enriched in polar residues. The segment at 1-29 (MRAPQHNSDFSRTVNQLADDPNPYEPEVG) is disordered. Residues 1-48 (MRAPQHNSDFSRTVNQLADDPNPYEPEVGSMPKNEFSRADLDNVNKTG) constitute a propeptide, removed in mature form; by autocatalysis. Threonine 49 functions as the Nucleophile in the catalytic mechanism.

It belongs to the peptidase T1B family. As to quaternary structure, the 20S proteasome core is composed of 14 alpha and 14 beta subunits that assemble into four stacked heptameric rings, resulting in a barrel-shaped structure. The two inner rings, each composed of seven catalytic beta subunits, are sandwiched by two outer rings, each composed of seven alpha subunits. The catalytic chamber with the active sites is on the inside of the barrel. Has a gated structure, the ends of the cylinder being occluded by the N-termini of the alpha-subunits. Is capped at one or both ends by the proteasome regulatory ATPase, PAN.

It is found in the cytoplasm. It carries out the reaction Cleavage of peptide bonds with very broad specificity.. The formation of the proteasomal ATPase PAN-20S proteasome complex, via the docking of the C-termini of PAN into the intersubunit pockets in the alpha-rings, triggers opening of the gate for substrate entry. Interconversion between the open-gate and close-gate conformations leads to a dynamic regulation of the 20S proteasome proteolysis activity. Component of the proteasome core, a large protease complex with broad specificity involved in protein degradation. This is Proteasome subunit beta from Natrialba magadii (strain ATCC 43099 / DSM 3394 / CCM 3739 / CIP 104546 / IAM 13178 / JCM 8861 / NBRC 102185 / NCIMB 2190 / MS3) (Natronobacterium magadii).